A 334-amino-acid polypeptide reads, in one-letter code: Holliday junction branch migration complex subunit RuvB (334 aa).

The large ATPase domain (RuvB-L) stretch occupies residues 1–182 (MDERLVSSEA…FGVLSRLEYY (182 aa)). Residues Leu21, Arg22, Gly63, Lys66, Thr67, Thr68, 129-131 (EDF), Arg172, Tyr182, and Arg219 each bind ATP. Residue Thr67 participates in Mg(2+) binding. The tract at residues 183–253 (TQEELTDIVS…IAHDALERLQ (71 aa)) is small ATPAse domain (RuvB-S). A head domain (RuvB-H) region spans residues 256 to 334 (ALGLDHIDHK…HFRLEAPARD (79 aa)). DNA contacts are provided by Arg311 and Arg316.

Belongs to the RuvB family. Homohexamer. Forms an RuvA(8)-RuvB(12)-Holliday junction (HJ) complex. HJ DNA is sandwiched between 2 RuvA tetramers; dsDNA enters through RuvA and exits via RuvB. An RuvB hexamer assembles on each DNA strand where it exits the tetramer. Each RuvB hexamer is contacted by two RuvA subunits (via domain III) on 2 adjacent RuvB subunits; this complex drives branch migration. In the full resolvosome a probable DNA-RuvA(4)-RuvB(12)-RuvC(2) complex forms which resolves the HJ.

It is found in the cytoplasm. It catalyses the reaction ATP + H2O = ADP + phosphate + H(+). The RuvA-RuvB-RuvC complex processes Holliday junction (HJ) DNA during genetic recombination and DNA repair, while the RuvA-RuvB complex plays an important role in the rescue of blocked DNA replication forks via replication fork reversal (RFR). RuvA specifically binds to HJ cruciform DNA, conferring on it an open structure. The RuvB hexamer acts as an ATP-dependent pump, pulling dsDNA into and through the RuvAB complex. RuvB forms 2 homohexamers on either side of HJ DNA bound by 1 or 2 RuvA tetramers; 4 subunits per hexamer contact DNA at a time. Coordinated motions by a converter formed by DNA-disengaged RuvB subunits stimulates ATP hydrolysis and nucleotide exchange. Immobilization of the converter enables RuvB to convert the ATP-contained energy into a lever motion, pulling 2 nucleotides of DNA out of the RuvA tetramer per ATP hydrolyzed, thus driving DNA branch migration. The RuvB motors rotate together with the DNA substrate, which together with the progressing nucleotide cycle form the mechanistic basis for DNA recombination by continuous HJ branch migration. Branch migration allows RuvC to scan DNA until it finds its consensus sequence, where it cleaves and resolves cruciform DNA. This Bacillus velezensis (strain DSM 23117 / BGSC 10A6 / LMG 26770 / FZB42) (Bacillus amyloliquefaciens subsp. plantarum) protein is Holliday junction branch migration complex subunit RuvB.